The chain runs to 419 residues: GTPase Obg (419 aa).

In terms of domain architecture, Obg spans 1–158 (MFVDQARIFV…KWIRLELKLL (158 aa)). An OBG-type G domain is found at 159–327 (ADVGLVGFPN…LMGKTYALLQ (169 aa)). GTP-binding positions include 165-172 (GFPNAGKS), 190-194 (FTTLV), 212-215 (DIPG), 282-285 (NKMD), and 308-310 (SAV). Mg(2+) is bound by residues Ser172 and Thr192. One can recognise an OCT domain in the interval 342–419 (RRFEEELPFK…IKDFEFEFTE (78 aa)).

Belongs to the TRAFAC class OBG-HflX-like GTPase superfamily. OBG GTPase family. In terms of assembly, monomer. The cofactor is Mg(2+).

It localises to the cytoplasm. Functionally, an essential GTPase which binds GTP, GDP and possibly (p)ppGpp with moderate affinity, with high nucleotide exchange rates and a fairly low GTP hydrolysis rate. Plays a role in control of the cell cycle, stress response, ribosome biogenesis and in those bacteria that undergo differentiation, in morphogenesis control. This Syntrophomonas wolfei subsp. wolfei (strain DSM 2245B / Goettingen) protein is GTPase Obg.